The primary structure comprises 423 residues: Kynureninase (423 aa).

Pyridoxal 5'-phosphate contacts are provided by residues Leu105, Ser106, 133–136 (FPSD), Asp218, His221, and Tyr243. At Lys244 the chain carries N6-(pyridoxal phosphate)lysine. Pyridoxal 5'-phosphate contacts are provided by Trp273 and Asn301.

Belongs to the kynureninase family. Homodimer. Pyridoxal 5'-phosphate serves as cofactor.

The catalysed reaction is L-kynurenine + H2O = anthranilate + L-alanine + H(+). It carries out the reaction 3-hydroxy-L-kynurenine + H2O = 3-hydroxyanthranilate + L-alanine + H(+). It functions in the pathway amino-acid degradation; L-kynurenine degradation; L-alanine and anthranilate from L-kynurenine: step 1/1. Its pathway is cofactor biosynthesis; NAD(+) biosynthesis; quinolinate from L-kynurenine: step 2/3. Catalyzes the cleavage of L-kynurenine (L-Kyn) and L-3-hydroxykynurenine (L-3OHKyn) into anthranilic acid (AA) and 3-hydroxyanthranilic acid (3-OHAA), respectively. This Xanthomonas oryzae pv. oryzae (strain MAFF 311018) protein is Kynureninase.